Here is a 99-residue protein sequence, read N- to C-terminus: uncharacterized protein (99 aa).

This sequence belongs to the HesB/IscA family.

This is an uncharacterized protein from Staphylococcus haemolyticus (strain JCSC1435).